The following is a 1377-amino-acid chain: Dicer-like protein 2 (1377 aa).

One can recognise a Helicase ATP-binding domain in the interval 23 to 203 (MFEASLKENI…MKTLESNLDS (181 aa)). 36–43 (MDTGTGKT) is a binding site for ATP. The DEAH box motif lies at 144–147 (DEAH). One can recognise a Helicase C-terminal domain in the interval 368 to 531 (ALINFLDKFD…AYQDEERRLR (164 aa)). Residues 561-655 (VVTHLYHFCA…LPLTKNPEMR (95 aa)) form the Dicer dsRNA-binding fold domain. RNase III domains are found at residues 914 to 1052 (RLCA…LDGG) and 1092 to 1275 (DGDL…VDSG). Positions 1131, 1261, and 1264 each coordinate Mg(2+).

This sequence belongs to the helicase family. Dicer subfamily. Mg(2+) serves as cofactor. The cofactor is Mn(2+).

Dicer-like endonuclease involved in cleaving double-stranded RNA in the RNA interference (RNAi) pathway. Produces 21 to 25 bp dsRNAs (siRNAs) which target the selective destruction of homologous RNAs leading to sequence-specific suppression of gene expression, called post-transcriptional gene silencing (PTGS). Part of a broad host defense response against viral infection and transposons. The protein is Dicer-like protein 2 (dcl2) of Aspergillus oryzae (strain ATCC 42149 / RIB 40) (Yellow koji mold).